Reading from the N-terminus, the 741-residue chain is Prestin (741 aa).

Residues Met1–Tyr79 lie on the Cytoplasmic side of the membrane. Residues Val80 to Ala105 traverse the membrane as a helical segment. Residues Ala106 to Pro109 are Extracellular-facing. The chain crosses the membrane as a helical span at residues Val110–Phe125. Residues Phe126–Phe137 are Cytoplasmic-facing. The helical transmembrane segment at Ala138–Val147 threads the bilayer. The Extracellular segment spans residues Ala148–Val178. An Involved in motor function motif is present at residues Ile158 to Thr168. Asn163 and Asn166 each carry an N-linked (GlcNAc...) asparagine glycan. Helical transmembrane passes span Ala179 to Pro208 and Leu209 to Phe230. Over Gly231–Val243 the chain is Extracellular. The segment at residues Val244–Val248 is an intramembrane region (helical). The Extracellular portion of the chain corresponds to Ala249–Ser261. A helical membrane pass occupies residues Leu262–Lys283. Topologically, residues Glu284–Pro291 are cytoplasmic. Residues Leu292–Ile303 traverse the membrane as a helical segment. Residues Ser304–Leu338 lie on the Extracellular side of the membrane. A helical membrane pass occupies residues Val339 to Leu361. Residues Ala362–Asp370 are Cytoplasmic-facing. Residues Gly371 to Phe388 traverse the membrane as a helical segment. The Extracellular portion of the chain corresponds to Gln389 to Ser396. The chain crosses the membrane as a helical span at residues Leu397–Thr406. Ser398 contacts salicylate. Residues Gly407–Thr410 lie on the Cytoplasmic side of the membrane. The helical transmembrane segment at Gln411–Gly429 threads the bilayer. At Phe430–Pro436 the chain is on the extracellular side. The helical transmembrane segment at Gln437–Pro459 threads the bilayer. Over Phe460–Ile467 the chain is Cytoplasmic. The chain crosses the membrane as a helical span at residues Glu468–Gly483. Residue Leu484 is a topological domain, extracellular. The chain crosses the membrane as a helical span at residues Asp485 to Thr498. The Cytoplasmic segment spans residues Val499–Ala741. Residues Ser505–Ala718 are extended region for STAS domain. The 189-residue stretch at Ala525–Ser713 folds into the STAS domain. Residues Ala718–Ala741 form a disordered region. The span at Glu721–Gln730 shows a compositional bias: low complexity.

It belongs to the SLC26A/SulP transporter (TC 2.A.53) family. In terms of assembly, homodimer. Interacts (via STAS domain) with CALM; this interaction is calcium-dependent and the STAS domain interacts with only one lobe of CALM which is an elongated conformation.

The protein resides in the cell membrane. It catalyses the reaction 2 hydrogencarbonate(in) + chloride(out) = 2 hydrogencarbonate(out) + chloride(in). Voltage-sensitive motor protein that drives outer hair cell (OHC) electromotility (eM) and participates in sound amplification in the hearing organ. Converts changes in the transmembrane electric potential into mechanical displacements resulting in the coupling of its expansion to movement of a charged voltage sensor across the lipid membrane. The nature of the voltage sensor is not completely clear, and two models compete. In the first model, acts as an incomplete transporter where intracellular chloride anion acts as extrinsic voltage sensor that drives conformational change in the protein which is sufficient to produce a length change in the plane of the membrane and hence in the length of the OHC. The second model in which multiple charged amino acid residues are distributed at the intracellular and extracellular membrane interfaces that form an intrinsic voltage sensor, whose movement produces the non-linear capacitance (NLC). However, the effective voltage sensor may be the result of a hybrid voltage sensor assembled from intrinsic charge (charged residues) and extrinsic charge (bound anion). Notably, binding of anions to the anion-binding pocket partially neutralizes the intrinsic positive charge rather than to form an electrically negative sensor, therefore remaining charge may serve as voltage sensor that, after depolarization, moves from down (expanded state) to up (contracted) conformation, which is accompanied by an eccentric contraction of the intermembrane cross-sectional area of the protein as well as a major increase in the hydrophobic thickness of the protein having as consequences the plasma membrane thickening and the cell contraction after membrane depolarization. The anion-binding pocket transits from the inward-open (Down) state, where it is exposed toward the intracellular solvent in the absence of anion, to the occluded (Up) state upon anion binding. Salicylate competes for the anion-binding site and inhibits the voltage-sensor movement, and therefore inhibits the charge transfer and electromotility by displacing Cl(-) from the anion-binding site and by preventing the structural transitions to the contracted state. In addition, can act as a weak Cl(-)/HCO3 (-) antiporter across the cell membrane and so regulate the intracellular pH of the outer hair cells (OHCs), while firstly found as being unable to mediate electrogenic anion transport. Moreover, supports a role in cardiac mechanical amplification serving as an elastic element to enhance the actomyosin- based sarcomere contraction system. In Tursiops truncatus (Atlantic bottle-nosed dolphin), this protein is Prestin.